Here is a 227-residue protein sequence, read N- to C-terminus: 2,3-bisphosphoglycerate-dependent phosphoglycerate mutase (227 aa).

Substrate-binding positions include 7–14 (RHGLSEWN), 20–21 (TG), Arg59, 86–89 (ERHY), Lys97, 113–114 (RR), and 182–183 (GN). His8 acts as the Tele-phosphohistidine intermediate in catalysis. Glu86 acts as the Proton donor/acceptor in catalysis.

It belongs to the phosphoglycerate mutase family. BPG-dependent PGAM subfamily. Homodimer.

It carries out the reaction (2R)-2-phosphoglycerate = (2R)-3-phosphoglycerate. The protein operates within carbohydrate degradation; glycolysis; pyruvate from D-glyceraldehyde 3-phosphate: step 3/5. Catalyzes the interconversion of 2-phosphoglycerate and 3-phosphoglycerate. This chain is 2,3-bisphosphoglycerate-dependent phosphoglycerate mutase, found in Actinobacillus succinogenes (strain ATCC 55618 / DSM 22257 / CCUG 43843 / 130Z).